Reading from the N-terminus, the 180-residue chain is Large ribosomal subunit protein uL5 (180 aa).

It belongs to the universal ribosomal protein uL5 family. Part of the 50S ribosomal subunit; part of the 5S rRNA/L5/L18/L25 subcomplex. Contacts the 5S rRNA and the P site tRNA. Forms a bridge to the 30S subunit in the 70S ribosome.

This is one of the proteins that bind and probably mediate the attachment of the 5S RNA into the large ribosomal subunit, where it forms part of the central protuberance. In the 70S ribosome it contacts protein S13 of the 30S subunit (bridge B1b), connecting the 2 subunits; this bridge is implicated in subunit movement. Contacts the P site tRNA; the 5S rRNA and some of its associated proteins might help stabilize positioning of ribosome-bound tRNAs. The polypeptide is Large ribosomal subunit protein uL5 (Leuconostoc citreum (strain KM20)).